The chain runs to 485 residues: Hexokinase-1 (485 aa).

The region spanning 21–468 is the Hexokinase domain; the sequence is KELMDEIHQL…SGAGAAVIAA (448 aa). The hexokinase small subdomain stretch occupies residues 75-209; the sequence is TGKESGNYLA…ELPIEIVALI (135 aa). Residues 86–91 and K111 contribute to the ATP site; that span reads DLGGTN. Substrate contacts are provided by residues S158, 175-176, 210-211, and N237; these read TK and ND. The interval 210–457 is hexokinase large subdomain; sequence NDTVGTLIAS…DPITIVPAED (248 aa). S245 is modified (phosphoserine). E269 provides a ligand contact to substrate. A Phosphoserine modification is found at S272. E302 contributes to the substrate binding site. ATP is bound by residues 307–308, 344–348, and 419–423; these read GY, TSYPA, and SVYNK.

Belongs to the hexokinase family. In terms of assembly, homodimer.

The catalysed reaction is a D-hexose + ATP = a D-hexose 6-phosphate + ADP + H(+). It catalyses the reaction D-fructose + ATP = D-fructose 6-phosphate + ADP + H(+). The enzyme catalyses D-glucose + ATP = D-glucose 6-phosphate + ADP + H(+). The protein operates within carbohydrate metabolism; hexose metabolism. Its pathway is carbohydrate degradation; glycolysis; D-glyceraldehyde 3-phosphate and glycerone phosphate from D-glucose: step 1/4. Subject to allosteric control. Substrate inhibition by ATP. Its function is as follows. Catalyzes the phosphorylation of hexose, such as D-glucose and D-fructose, to hexose 6-phosphate (D-glucose 6-phosphate and D-fructose 6-phosphate, respectively). Mediates the initial step of glycolysis by catalyzing phosphorylation of D-glucose to D-glucose 6-phosphate. The polypeptide is Hexokinase-1 (HXK1) (Saccharomyces cerevisiae (strain ATCC 204508 / S288c) (Baker's yeast)).